The following is a 519-amino-acid chain: Pleckstrin homology domain-containing family A member 8 (519 aa).

The 93-residue stretch at 1 to 93 (MEGVLYKWTN…WLVALGSAKA (93 aa)) folds into the PH domain. Threonine 139 is subject to Phosphothreonine. Serine 145 bears the Phosphoserine mark. Phosphothreonine is present on threonine 153. The glycolipid transfer protein homology domain stretch occupies residues 310-519 (TFFSTMNTSF…VHGLESDEVV (210 aa)).

In terms of assembly, homodimer. Interacts with ARF1; the interaction together with phosphatidylinositol 4-phosphate binding is required for FAPP2 GlcCer transfer ability. As to expression, expressed in kidney cell lines.

The protein resides in the golgi apparatus. The protein localises to the trans-Golgi network membrane. It is found in the membrane. Its function is as follows. Cargo transport protein that is required for apical transport from the Golgi complex. Transports AQP2 from the trans-Golgi network (TGN) to sites of AQP2 phosphorylation. Mediates the non-vesicular transport of glucosylceramide (GlcCer) from the trans-Golgi network (TGN) to the plasma membrane and plays a pivotal role in the synthesis of complex glycosphingolipids. Binding of both phosphatidylinositol 4-phosphate (PIP) and ARF1 are essential for the GlcCer transfer ability. Also required for primary cilium formation, possibly by being involved in the transport of raft lipids to the apical membrane, and for membrane tubulation. The protein is Pleckstrin homology domain-containing family A member 8 (PLEKHA8) of Homo sapiens (Human).